A 271-amino-acid chain; its full sequence is Urease accessory protein UreD (271 aa).

This sequence belongs to the UreD family. As to quaternary structure, ureD, UreF and UreG form a complex that acts as a GTP-hydrolysis-dependent molecular chaperone, activating the urease apoprotein by helping to assemble the nickel containing metallocenter of UreC. The UreE protein probably delivers the nickel.

The protein resides in the cytoplasm. Its function is as follows. Required for maturation of urease via the functional incorporation of the urease nickel metallocenter. The protein is Urease accessory protein UreD of Mycolicibacterium smegmatis (strain ATCC 700084 / mc(2)155) (Mycobacterium smegmatis).